Reading from the N-terminus, the 405-residue chain is L-carnitine CoA-transferase (405 aa).

Lysine 97 and arginine 104 together coordinate CoA. Aspartate 169 serves as the catalytic Nucleophile.

This sequence belongs to the CoA-transferase III family. CaiB subfamily. In terms of assembly, homodimer.

It is found in the cytoplasm. The catalysed reaction is crotonobetainyl-CoA + (R)-carnitine = crotonobetaine + (R)-carnitinyl-CoA. It catalyses the reaction 4-(trimethylamino)butanoyl-CoA + (R)-carnitine = (R)-carnitinyl-CoA + 4-(trimethylamino)butanoate. Its pathway is amine and polyamine metabolism; carnitine metabolism. Catalyzes the reversible transfer of the CoA moiety from gamma-butyrobetainyl-CoA to L-carnitine to generate L-carnitinyl-CoA and gamma-butyrobetaine. Is also able to catalyze the reversible transfer of the CoA moiety from gamma-butyrobetainyl-CoA or L-carnitinyl-CoA to crotonobetaine to generate crotonobetainyl-CoA. The sequence is that of L-carnitine CoA-transferase from Escherichia fergusonii (strain ATCC 35469 / DSM 13698 / CCUG 18766 / IAM 14443 / JCM 21226 / LMG 7866 / NBRC 102419 / NCTC 12128 / CDC 0568-73).